The following is a 700-amino-acid chain: Calpain-2 catalytic subunit (700 aa).

The propeptide at 2 to 19 is anchors to the small subunit; sequence AGMAAALAKERAAAAGAG. The Calpain catalytic domain maps to 45 to 344; sequence LFHDPSFPAG…YSRLEICNLT (300 aa). Gly-91 and Asp-96 together coordinate Ca(2+). Cys-105 is an active-site residue. Ca(2+) contacts are provided by Glu-175, Gln-229, and Lys-230. Active-site residues include His-262 and Asn-286. Ca(2+) is bound by residues Glu-292, Asp-299, and Glu-323. The segment at 345–514 is domain III; it reads PDTLASDRYK…KNANSTVIDD (170 aa). The tract at residues 515–529 is linker; it reads EIEANFEETEIDEDD. The segment at 530-700 is domain IV; that stretch reads IEPSFKKLFG…LINWLFFTVI (171 aa). 16 residues coordinate Ca(2+): Ala-542, Asp-545, Glu-547, Glu-552, Asp-585, Asp-587, Ser-589, Lys-591, Glu-596, Asp-615, Asp-617, Ser-619, Thr-621, Glu-626, Asp-658, and Asn-661. EF-hand domains are found at residues 572–605 and 602–637; these read FSIETCKIMVDLLDNDGSGKLGLKEFHTLWTKIQ and TKIQKYQKIYREIDVDRSGTMNSYEMRRALEAAGFK. Positions 667–700 constitute an EF-hand 3 domain; sequence IRLETLYKMFRKLDTEKTGTIELNLINWLFFTVI.

Belongs to the peptidase C2 family. In terms of assembly, forms a heterodimer with a small (regulatory) subunit (CAPNS1). Ca(2+) is required as a cofactor. Ubiquitous.

The protein localises to the cytoplasm. The protein resides in the cell membrane. The enzyme catalyses Broad endopeptidase specificity.. Its activity is regulated as follows. Activated by 200-1000 micromolar concentrations of calcium and inhibited by calpastatin. In terms of biological role, calcium-regulated non-lysosomal thiol-protease which catalyze limited proteolysis of substrates involved in cytoskeletal remodeling and signal transduction. In Gallus gallus (Chicken), this protein is Calpain-2 catalytic subunit (CAPN2).